The following is a 1353-amino-acid chain: Xanthine dehydrogenase (1353 aa).

The 88-residue stretch at 17 to 104 (STLIFFVNGK…GSAVTTVEGI (88 aa)) folds into the 2Fe-2S ferredoxin-type domain. 8 residues coordinate [2Fe-2S] cluster: Cys-56, Cys-61, Cys-64, Cys-86, Cys-126, Cys-129, Cys-161, and Cys-163. One can recognise an FAD-binding PCMH-type domain in the interval 245-434 (YKGERATWYR…VGLYFPKTLE (190 aa)). Residues 273–280 (LVVGNTEI), Phe-353, 363–367 (SLGGN), Asp-376, Leu-424, and Lys-442 contribute to the FAD site. Residues Gln-790 and Phe-821 each contribute to the Mo-molybdopterin site. Substrate-binding residues include Glu-825 and Arg-903. Arg-935 is a Mo-molybdopterin binding site. Residue Phe-937 participates in substrate binding. Residue Ala-1102 coordinates Mo-molybdopterin. The Proton acceptor role is filled by Glu-1285.

The protein belongs to the xanthine dehydrogenase family. In terms of assembly, homodimer. The cofactor is FAD. Requires Mo-molybdopterin as cofactor. It depends on [2Fe-2S] cluster as a cofactor.

It is found in the peroxisome. It carries out the reaction xanthine + NAD(+) + H2O = urate + NADH + H(+). It catalyses the reaction hypoxanthine + NAD(+) + H2O = xanthine + NADH + H(+). Functionally, key enzyme in purine degradation. Catalyzes the oxidation of hypoxanthine to xanthine. Catalyzes the oxidation of xanthine to uric acid. The protein is Xanthine dehydrogenase (XDH) of Calliphora vicina (Blue blowfly).